The primary structure comprises 623 residues: Leucine aminopeptidase 2 (623 aa).

Residues 136–138 (QCE) and 261–266 (PYGGME) each bind a peptide. Residue histidine 290 coordinates Zn(2+). Residue glutamate 291 is the Proton acceptor of the active site. Residues histidine 294 and glutamate 313 each coordinate Zn(2+). Catalysis depends on tyrosine 391, which acts as the Proton donor.

It belongs to the peptidase M1 family. It depends on Zn(2+) as a cofactor.

It is found in the cytoplasm. It localises to the nucleus. It catalyses the reaction an epoxide + H2O = an ethanediol. Its function is as follows. Aminopeptidase that preferentially cleaves di- and tripeptides. Also has low epoxide hydrolase activity (in vitro). Can hydrolyze the epoxide leukotriene LTA(4) but it forms preferentially 5,6-dihydroxy-7,9,11,14-eicosatetraenoic acid rather than the cytokine leukotriene B(4) as the product compared to the homologous mammalian enzyme (in vitro). The chain is Leucine aminopeptidase 2 (LKH1) from Candida albicans (strain SC5314 / ATCC MYA-2876) (Yeast).